The sequence spans 197 residues: 3-isopropylmalate dehydratase small subunit (197 aa).

It belongs to the LeuD family. LeuD type 1 subfamily. As to quaternary structure, heterodimer of LeuC and LeuD.

The catalysed reaction is (2R,3S)-3-isopropylmalate = (2S)-2-isopropylmalate. The protein operates within amino-acid biosynthesis; L-leucine biosynthesis; L-leucine from 3-methyl-2-oxobutanoate: step 2/4. Catalyzes the isomerization between 2-isopropylmalate and 3-isopropylmalate, via the formation of 2-isopropylmaleate. This chain is 3-isopropylmalate dehydratase small subunit, found in Corynebacterium glutamicum (strain ATCC 13032 / DSM 20300 / JCM 1318 / BCRC 11384 / CCUG 27702 / LMG 3730 / NBRC 12168 / NCIMB 10025 / NRRL B-2784 / 534).